The sequence spans 189 residues: dCTP deaminase (189 aa).

DCTP is bound by residues 112-117 (KSTYAR), 136-138 (TLE), Q157, Y171, and Q181. E138 (proton donor/acceptor) is an active-site residue.

It belongs to the dCTP deaminase family. As to quaternary structure, homotrimer.

The enzyme catalyses dCTP + H2O + H(+) = dUTP + NH4(+). The protein operates within pyrimidine metabolism; dUMP biosynthesis; dUMP from dCTP (dUTP route): step 1/2. In terms of biological role, catalyzes the deamination of dCTP to dUTP. This Xanthomonas campestris pv. campestris (strain 8004) protein is dCTP deaminase.